We begin with the raw amino-acid sequence, 212 residues long: Ras-related protein Rab-2A (212 aa).

A2 bears the N-acetylalanine mark. A required for interaction with PRKCI region spans residues 2 to 19 (AYAYLFKYIIIGDTGVGK). G16, V17, G18, K19, S20, C21, and T38 together coordinate GTP. Position 20 (S20) interacts with Mg(2+). The Switch 1 motif lies at 37 to 42 (LTMGVE). Residues T38 and D61 each coordinate Mg(2+). Positions 63–72 (AGQESFRSIT) match the Switch 2 motif. GTP contacts are provided by G64, N119, K120, D122, A150, and K151. The tract at residues 190-212 (QHAATNASHGGNQGGQQAGGGCC) is disordered. Gly residues predominate over residues 200-212 (GNQGGQQAGGGCC). Residues C211 and C212 are each lipidated (S-geranylgeranyl cysteine).

Belongs to the small GTPase superfamily. Rab family. As to quaternary structure, interacts with PRKCI. Interacts with TRIP11. Interacts (in GTP-bound form) with GARIN1B. Interacts (GTP-bound) with HOPS complex component VPS39; interaction contributes to obtaining a functional HOPS complex that promotes autophagosome-lysosome membrane fusion driven by STX17-SNAP29-VAMP8. May interact with VPS41. The cofactor is Mg(2+). Prenylated. Prenylation is required for association with cellular membranes.

It is found in the endoplasmic reticulum-Golgi intermediate compartment membrane. The protein resides in the melanosome. Its subcellular location is the endoplasmic reticulum membrane. The protein localises to the golgi apparatus membrane. It localises to the cytoplasmic vesicle. It is found in the secretory vesicle. The protein resides in the acrosome. Its subcellular location is the autophagosome membrane. It carries out the reaction GTP + H2O = GDP + phosphate + H(+). With respect to regulation, regulated by guanine nucleotide exchange factors (GEFs) which promote the exchange of bound GDP for free GTP, GTPase activating proteins (GAPs) which increase the GTP hydrolysis activity, and GDP dissociation inhibitors (GDIs) which inhibit the dissociation of the nucleotide from the GTPase. Functionally, the small GTPases Rab are key regulators of intracellular membrane trafficking, from the formation of transport vesicles to their fusion with membranes. Rabs cycle between active GTP-bound and inactive GDP-bound states. In their active state, drive transport of vesicular carriers from donor organelles to acceptor organelles to regulate the membrane traffic that maintains organelle identity and morphology. RAB2A regulates autophagy by promoting autophagosome-lysosome fusion via recruitment of the HOPS endosomal tethering complex; this process involves autophagosomal RAB2A and lysosomal RAB39A recruitment of HOPS subcomplexes VPS39-VPS11 and VPS41-VPS16-VPS18-VPS33A, respectively, which assemble into a functional complex to mediate membrane tethering and SNAREs-driven membrane fusion. Required for protein transport from the endoplasmic reticulum to the Golgi complex. Regulates the compacted morphology of the Golgi. Together with RAB2B, redundantly required for efficient autophagic flux. This chain is Ras-related protein Rab-2A (Rab2a), found in Rattus norvegicus (Rat).